Reading from the N-terminus, the 409-residue chain is Tetracenomycin polyketide synthase ketoacyl synthase beta subunit (409 aa).

A Ketosynthase family 3 (KS3) domain is found at 4–407; the sequence is PAPVVVTGLG…GFNSALVVRR (404 aa).

This sequence belongs to the thiolase-like superfamily. Beta-ketoacyl-ACP synthases family. The tetracenomycin polyketide synthase (TCM PKS) is composed of a ketosynthase complex (TcmKL), an acyl carrier protein (TcmM), a cyclase (TcmN) and a probable second cyclase (TcmJ). TcmK and TcmL form a heterodimeric complex.

The catalysed reaction is 10 malonyl-CoA + 8 H(+) = tetracenomycin F2 + 10 CO2 + 10 CoA + 2 H2O. The protein operates within antibiotic biosynthesis; tetracenomycin C biosynthesis. Its function is as follows. Involved in the biosynthesis of tetracenomycin C (TCM C). Part of a type II polyketide synthase (PKS) that catalyzes the synthesis of tetracenomycin F2 (TCM F2), a precursor of TCM C, from malonyl-CoA. TcmK and TcmL form a heterodimeric alpha-beta complex that catalyzes the condensation reactions between the growing acyl-enzyme chain and the malonyl-CoA extender units. This is Tetracenomycin polyketide synthase ketoacyl synthase beta subunit from Streptomyces glaucescens.